We begin with the raw amino-acid sequence, 549 residues long: Phosphoenolpyruvate carboxykinase (ATP) (549 aa).

An ATP-binding site is contributed by 250 to 257; that stretch reads GLSGTGKT.

Belongs to the phosphoenolpyruvate carboxykinase (ATP) family. As to quaternary structure, homotetramer.

It carries out the reaction oxaloacetate + ATP = phosphoenolpyruvate + ADP + CO2. It functions in the pathway carbohydrate biosynthesis; gluconeogenesis. This Saccharomyces cerevisiae (strain ATCC 204508 / S288c) (Baker's yeast) protein is Phosphoenolpyruvate carboxykinase (ATP) (PCK1).